Here is a 443-residue protein sequence, read N- to C-terminus: tRNA(Ile2) 2-agmatinylcytidine synthetase TiaS (443 aa).

The protein belongs to the TiaS family.

It localises to the cytoplasm. It catalyses the reaction cytidine(34) in tRNA(Ile2) + agmatine + ATP + H2O = 2-agmatinylcytidine(34) in tRNA(Ile2) + AMP + 2 phosphate + 2 H(+). Its function is as follows. ATP-dependent agmatine transferase that catalyzes the formation of 2-agmatinylcytidine (agm2C) at the wobble position (C34) of tRNA(Ile2), converting the codon specificity from AUG to AUA. The protein is tRNA(Ile2) 2-agmatinylcytidine synthetase TiaS of Saccharolobus islandicus (strain L.S.2.15 / Lassen #1) (Sulfolobus islandicus).